The chain runs to 497 residues: MTNINVRNYIDESYGLFINNEFQASDSGETLTVSNPANGEDLAKVARAGKKDVDKAVQAAHDAFDSWSKISKEERADYLLEISRRIHEKTEHLATVESLQNGKPYRETSTIDVPQAANQFKYFASVLTTDEGSVNEIDQNTMSLVVNEPVGVVGAVVAWNFPILLASWKLGPALAAGNTVVIQPSSSTPLSLIELAKIFQEVLPKGVVNVLTGKGSESGDAIFHHEGVDKLSFTGSTDVGYGVAQAGAERIVPTTLELGGKSANIIFDDANLEQVIEGVQLGILFNQGEVCSAGSRLLVQSSIYDELLPKLKEAFENIKVGDPFDEDTKMSAQTGPEQLDKIESYIKIAEEDDKANILTGGHRITDNGLDKGYFFEPTIIEINDNKHQLAQEEIFGPVVVVEKFDDEQEAIEIANDSEYGLAGGIFTTDIHRALNVAKAMRTGRIWINTYNQIPAGAPFGGYKKSGIGREVYKDAIKNYQQVKNIFIDTSNQTKGLY.

Residue 213–219 participates in NAD(+) binding; sequence GKGSESG. Active-site residues include Glu-257 and Cys-291.

It belongs to the aldehyde dehydrogenase family.

The catalysed reaction is an aldehyde + NAD(+) + H2O = a carboxylate + NADH + 2 H(+). The sequence is that of Putative aldehyde dehydrogenase AldA (aldA) from Staphylococcus epidermidis (strain ATCC 35984 / DSM 28319 / BCRC 17069 / CCUG 31568 / BM 3577 / RP62A).